The sequence spans 108 residues: Biogenesis of lysosome-related organelles complex 1 subunit CNL1 (108 aa).

It belongs to the BLOC1S4 family. In terms of assembly, component of the biogenesis of lysosome-related organelles complex-1 (BLOC-1).

The protein resides in the cytoplasm. Component of the biogenesis of lysosome-related organelles complex-1 (BLOC-1), a complex that is involved in endosomal cargo sorting. The polypeptide is Biogenesis of lysosome-related organelles complex 1 subunit CNL1 (CLN1) (Zygosaccharomyces rouxii (strain ATCC 2623 / CBS 732 / NBRC 1130 / NCYC 568 / NRRL Y-229)).